Here is a 181-residue protein sequence, read N- to C-terminus: ATP synthase subunit delta (181 aa).

It belongs to the ATPase delta chain family. As to quaternary structure, F-type ATPases have 2 components, F(1) - the catalytic core - and F(0) - the membrane proton channel. F(1) has five subunits: alpha(3), beta(3), gamma(1), delta(1), epsilon(1). F(0) has three main subunits: a(1), b(2) and c(10-14). The alpha and beta chains form an alternating ring which encloses part of the gamma chain. F(1) is attached to F(0) by a central stalk formed by the gamma and epsilon chains, while a peripheral stalk is formed by the delta and b chains. The F(1)F(0) complex interacts with SpoIIIJ and YqjG; YqgA is found in the same complex. Interacts with FloT.

It localises to the cell membrane. It is found in the membrane raft. Its function is as follows. F(1)F(0) ATP synthase produces ATP from ADP in the presence of a proton or sodium gradient. F-type ATPases consist of two structural domains, F(1) containing the extramembraneous catalytic core and F(0) containing the membrane proton channel, linked together by a central stalk and a peripheral stalk. During catalysis, ATP synthesis in the catalytic domain of F(1) is coupled via a rotary mechanism of the central stalk subunits to proton translocation. Functionally, this protein is part of the stalk that links CF(0) to CF(1). It either transmits conformational changes from CF(0) to CF(1) or is implicated in proton conduction. The chain is ATP synthase subunit delta from Bacillus subtilis (strain 168).